Here is a 203-residue protein sequence, read N- to C-terminus: Recombination protein RecR (203 aa).

The C4-type zinc-finger motif lies at 56–71; sequence CEVCGNVSDADRCRIC. Residues 79–179 form the Toprim domain; the sequence is SLVCVVEEPK…TVTRIASGLP (101 aa).

The protein belongs to the RecR family.

In terms of biological role, may play a role in DNA repair. It seems to be involved in an RecBC-independent recombinational process of DNA repair. It may act with RecF and RecO. The chain is Recombination protein RecR from Mycobacterium sp. (strain JLS).